The following is a 308-amino-acid chain: MQIYPLRLLPNKIDFDFMNFKKVSYTFSIILSLISFIWIGIYKFNFGIDFAGGIVIEVRLDQAPDLPKMRGVLGKLGIGEVVLQNFGSERDLSIRFGSNSEENLMKNIELIKGSLQSNFPYKFEYRKVDFVGPQVGRQLIEAGAMAMLFSFLAIMVYIWVRFEWYFGFGILIALVHDVILALGFMSMTKLDFNLSTIAAVLTIIGYSVNDSVVIYDRIRENLRKYHKKNITEIINLSINETLSRTILTVITTLLANLALILFGGEAIRSFSILVFFGIIVGTYSSIFISAPILTMFVNRKFNKKVIER.

The next 6 helical transmembrane spans lie at 28–48 (SIILSLISFIWIGIYKFNFGI), 140–160 (IEAGAMAMLFSFLAIMVYIWV), 164–184 (WYFGFGILIALVHDVILALGF), 194–214 (LSTIAAVLTIIGYSVNDSVVI), 246–266 (ILTVITTLLANLALILFGGEA), and 272–292 (ILVFFGIIVGTYSSIFISAPI).

The protein belongs to the SecD/SecF family. SecF subfamily. As to quaternary structure, forms a complex with SecD. Part of the essential Sec protein translocation apparatus which comprises SecA, SecYEG and auxiliary proteins SecDF-YajC and YidC.

Its subcellular location is the cell inner membrane. Functionally, part of the Sec protein translocase complex. Interacts with the SecYEG preprotein conducting channel. SecDF uses the proton motive force (PMF) to complete protein translocation after the ATP-dependent function of SecA. The protein is Protein translocase subunit SecF of Rickettsia rickettsii (strain Sheila Smith).